The following is a 345-amino-acid chain: MKQLKRKRKSNFSVQETQTLLKEITKRKEVIFSKQLNTTINVMKRMAWEEIAQCVNAVGEGEQRTGTEVKRRYLDWRALMKRKRMKANIKLVGSGFPLPSSDLDDSLTEEIDEKIGFRNDANFDWQNVADFRDAGGSLTEVKVEEEERDPQSPEFEIEEEEEMLSSVIPDSRRENELPDFPHIDEFFTLNSTPSRSAYDEPHLLVNIEKQKLELEKRRLDIEAERLQVEKERLQIEKERLRHLDMEHERLQLEKERLQIEREKLRLQIVNSEKPSLENELGQGEKSMLQPQDIETEKLKLERERLQLEKDRLQFLKFESEKLQIEKERLQVEKDRLRIQKEGHLQ.

The region spanning 4–77 is the Myb-like domain; that stretch reads LKRKRKSNFS…EVKRRYLDWR (74 aa). A Glycyl lysine isopeptide (Lys-Gly) (interchain with G-Cter in SUMO2) cross-link involves residue K9. S106 is subject to Phosphoserine. Residues K114 and K142 each participate in a glycyl lysine isopeptide (Lys-Gly) (interchain with G-Cter in SUMO2) cross-link. The disordered stretch occupies residues 143–175; sequence VEEEERDPQSPEFEIEEEEEMLSSVIPDSRREN. T188 carries the phosphothreonine modification. Positions 203–345 form a coiled coil; sequence LLVNIEKQKL…LRIQKEGHLQ (143 aa). Glycyl lysine isopeptide (Lys-Gly) (interchain with G-Cter in SUMO2) cross-links involve residues K237, K254, and K273.

This is Myb/SANT-like DNA-binding domain-containing protein 4 (MSANTD4) from Homo sapiens (Human).